A 447-amino-acid polypeptide reads, in one-letter code: Na(+)-translocating NADH-quinone reductase subunit A (447 aa).

The protein belongs to the NqrA family. As to quaternary structure, composed of six subunits; NqrA, NqrB, NqrC, NqrD, NqrE and NqrF.

The catalysed reaction is a ubiquinone + n Na(+)(in) + NADH + H(+) = a ubiquinol + n Na(+)(out) + NAD(+). In terms of biological role, NQR complex catalyzes the reduction of ubiquinone-1 to ubiquinol by two successive reactions, coupled with the transport of Na(+) ions from the cytoplasm to the periplasm. NqrA to NqrE are probably involved in the second step, the conversion of ubisemiquinone to ubiquinol. In Yersinia pseudotuberculosis serotype O:1b (strain IP 31758), this protein is Na(+)-translocating NADH-quinone reductase subunit A.